The sequence spans 701 residues: Elongation factor G (701 aa).

In terms of domain architecture, tr-type G spans 11–287 (TKVRNIGIMA…AVIDYLPSPL (277 aa)). GTP contacts are provided by residues 20–27 (AHIDAGKT), 84–88 (DTPGH), and 138–141 (NKMD).

It belongs to the TRAFAC class translation factor GTPase superfamily. Classic translation factor GTPase family. EF-G/EF-2 subfamily.

Its subcellular location is the cytoplasm. In terms of biological role, catalyzes the GTP-dependent ribosomal translocation step during translation elongation. During this step, the ribosome changes from the pre-translocational (PRE) to the post-translocational (POST) state as the newly formed A-site-bound peptidyl-tRNA and P-site-bound deacylated tRNA move to the P and E sites, respectively. Catalyzes the coordinated movement of the two tRNA molecules, the mRNA and conformational changes in the ribosome. The polypeptide is Elongation factor G (Mycobacterium ulcerans (strain Agy99)).